Here is a 317-residue protein sequence, read N- to C-terminus: Ribosome production factor 2 homolog (317 aa).

The Brix domain maps to 28–240; that stretch reads KTAIFLRGNA…IRRVQPAESD (213 aa). The segment at 287-317 is disordered; that stretch reads MKGLKRSVEEREDSENEEVEIEEDVISDASE. S293, S300, S313, and S316 each carry phosphoserine. A compositionally biased stretch (acidic residues) spans 296 to 317; that stretch reads EREDSENEEVEIEEDVISDASE.

This sequence belongs to the RPF2 family. Component of a hexameric 5S RNP precursor complex, composed of 5S RNA, rrs1, rpf2, rpl5a/rpl5b, rpl11a/rpl11b and syo1; this complex acts as a precursor for ribosome assembly.

It localises to the nucleus. It is found in the nucleolus. This is Ribosome production factor 2 homolog from Schizosaccharomyces pombe (strain 972 / ATCC 24843) (Fission yeast).